A 247-amino-acid polypeptide reads, in one-letter code: UPF0280 protein Mevan_0550 (247 aa).

This sequence belongs to the UPF0280 family.

This is UPF0280 protein Mevan_0550 from Methanococcus vannielii (strain ATCC 35089 / DSM 1224 / JCM 13029 / OCM 148 / SB).